The sequence spans 287 residues: Inactive phospholipid phosphatase 7 (287 aa).

The tract at residues 1–75 is disordered; sequence MPANQTRSRA…NNKDKKELPE (75 aa). Topologically, residues 1–120 are cytoplasmic; it reads MPANQTRSRA…SSSWGSVRSM (120 aa). The span at 31–40 shows a compositional bias: gly residues; sequence SGGGGGGGES. The segment covering 49–65 has biased composition (low complexity); sequence QRQQQNQQQQGDNPQPE. Residues 121 to 141 form a helical membrane-spanning segment; that stretch reads VKLLALTGHGIPWVFGTIVCL. Residues 142–146 lie on the Extracellular side of the membrane; that stretch reads MRSNT. A helical transmembrane segment spans residues 147–167; sequence LAGQEVLVNLLLALLLDVMTV. Over 168–215 the chain is Cytoplasmic; it reads SGMQKLVKRKGPWEMPPGFFDYLAMDIYSFPAAHASRAVMVSKFLLAH. A helical transmembrane segment spans residues 216–236; the sequence is LVLAVPLRILLVLWAILVGIS. The Extracellular portion of the chain corresponds to 237 to 247; sequence RVLLGRHHLTD. The helical transmembrane segment at 248–268 threads the bilayer; that stretch reads VGCGFALGFLHYSLVEMVWLS. Residues 269–287 are Cytoplasmic-facing; the sequence is SNTCQTLISIGTFNWSPLY.

It belongs to the PA-phosphatase related phosphoesterase family.

Its subcellular location is the nucleus envelope. It is found in the endoplasmic reticulum membrane. It localises to the membrane. In terms of biological role, plays a role as negative regulator of myoblast differentiation, in part through effects on MTOR signaling. Has no detectable enzymatic activity. The polypeptide is Inactive phospholipid phosphatase 7 (Danio rerio (Zebrafish)).